A 633-amino-acid polypeptide reads, in one-letter code: Protein CASP (633 aa).

Topologically, residues Met-1 to Leu-601 are cytoplasmic. Residues Gln-39–Pro-60 form a disordered region. 2 coiled-coil regions span residues Ile-111–Lys-339 and Ser-369–Glu-433. A helical; Anchor for type IV membrane protein membrane pass occupies residues Phe-602–Ile-622. Topologically, residues Ala-623 to Tyr-633 are lumenal.

The protein belongs to the CASP family.

It localises to the golgi apparatus membrane. May be involved in intra-Golgi transport. The protein is Protein CASP (coy1) of Schizosaccharomyces pombe (strain 972 / ATCC 24843) (Fission yeast).